Consider the following 130-residue polypeptide: Small ribosomal subunit protein uS9 (130 aa).

This sequence belongs to the universal ribosomal protein uS9 family.

The protein is Small ribosomal subunit protein uS9 of Paracidovorax citrulli (strain AAC00-1) (Acidovorax citrulli).